The chain runs to 297 residues: Probable DNA polymerase III subunit delta (297 aa).

The protein belongs to the DNA polymerase HolA subunit family. As to quaternary structure, component of the DNA clamp loading complex consisting of tau(3):delta(1):delta'(1). The DNA polymerase III holoenzyme complex contains at least 10 different subunits organized into 3 functionally essential subassemblies: the Pol III core, the beta sliding clamp processivity factor and the clamp-loading complex. The Pol III core (subunits alpha, epsilon and theta) contains the polymerase and the 3'-5' exonuclease proofreading activities. The polymerase is tethered to the template via the dimeric beta sliding clamp processivity factor. The DNA clamp-loading complex assembles the beta sliding clamp onto the primed template and plays a central role in the organization and communication at the replication fork.

The catalysed reaction is DNA(n) + a 2'-deoxyribonucleoside 5'-triphosphate = DNA(n+1) + diphosphate. Its function is as follows. Part of the beta sliding clamp loading complex, which hydrolyzes ATP to load the beta clamp onto primed DNA to form the DNA replication pre-initiation complex. DNA polymerase III is a complex, multichain enzyme responsible for most of the replicative synthesis in bacteria. This DNA polymerase also exhibits 3'-5' exonuclease activity. The delta subunit is the wrench that will open the beta subunit dimer. The DNA clamp loading complex (tau(3),delta,delta') is thought to load beta dimers onto DNA by binding ATP which alters the complex's conformation so it can bind beta sliding clamp dimers and open them at one interface. Primed DNA is recognized, ATP is hydrolyzed releasing the clamp loading complex and closing the beta sliding clamp ring around the primed DNA. In Mycoplasma genitalium (strain ATCC 33530 / DSM 19775 / NCTC 10195 / G37) (Mycoplasmoides genitalium), this protein is Probable DNA polymerase III subunit delta.